The primary structure comprises 332 residues: Ribosomal RNA small subunit methyltransferase C (332 aa).

It belongs to the methyltransferase superfamily. RsmC family. In terms of assembly, monomer.

It localises to the cytoplasm. The catalysed reaction is guanosine(1207) in 16S rRNA + S-adenosyl-L-methionine = N(2)-methylguanosine(1207) in 16S rRNA + S-adenosyl-L-homocysteine + H(+). Its function is as follows. Specifically methylates the guanine in position 1207 of 16S rRNA in the 30S particle. This chain is Ribosomal RNA small subunit methyltransferase C, found in Pseudomonas entomophila (strain L48).